The following is a 374-amino-acid chain: Phosphate-binding protein PstS 1 (374 aa).

The first 23 residues, 1-23 (MKIRLHTLLAVLTAAPLLLAAAG), serve as a signal peptide directing secretion. Cysteine 24 carries N-palmitoyl cysteine lipidation. Cysteine 24 carries S-diacylglycerol cysteine lipidation. Residues 25-48 (GSKPPSGSPETGAGAGTVATTPAS) are disordered. Residues 58-60 (STL), serine 88, aspartate 106, and 189-191 (SGD) each bind phosphate.

This sequence belongs to the PstS family. In terms of assembly, the complex is composed of two ATP-binding proteins (PstB), two transmembrane proteins (PstC and PstA) and a solute-binding protein (PstS).

It localises to the cell membrane. Part of the ABC transporter complex PstSACB involved in phosphate import. This Mycobacterium tuberculosis (strain CDC 1551 / Oshkosh) protein is Phosphate-binding protein PstS 1 (pstS1).